Reading from the N-terminus, the 205-residue chain is Proteasome subunit beta (205 aa).

A propeptide spans 1–8 (MDDKQYKG) (removed in mature form; by autocatalysis). The active-site Nucleophile is the T9.

It belongs to the peptidase T1B family. As to quaternary structure, the 20S proteasome core is composed of 14 alpha and 14 beta subunits that assemble into four stacked heptameric rings, resulting in a barrel-shaped structure. The two inner rings, each composed of seven catalytic beta subunits, are sandwiched by two outer rings, each composed of seven alpha subunits. The catalytic chamber with the active sites is on the inside of the barrel. Has a gated structure, the ends of the cylinder being occluded by the N-termini of the alpha-subunits. Is capped at one or both ends by the proteasome regulatory ATPase, PAN.

The protein resides in the cytoplasm. It catalyses the reaction Cleavage of peptide bonds with very broad specificity.. With respect to regulation, the formation of the proteasomal ATPase PAN-20S proteasome complex, via the docking of the C-termini of PAN into the intersubunit pockets in the alpha-rings, triggers opening of the gate for substrate entry. Interconversion between the open-gate and close-gate conformations leads to a dynamic regulation of the 20S proteasome proteolysis activity. Component of the proteasome core, a large protease complex with broad specificity involved in protein degradation. This Methanocella paludicola (strain DSM 17711 / JCM 13418 / NBRC 101707 / SANAE) protein is Proteasome subunit beta.